The primary structure comprises 215 residues: Urease accessory protein UreF (215 aa).

It belongs to the UreF family. In terms of assembly, ureD, UreF and UreG form a complex that acts as a GTP-hydrolysis-dependent molecular chaperone, activating the urease apoprotein by helping to assemble the nickel containing metallocenter of UreC. The UreE protein probably delivers the nickel.

The protein resides in the cytoplasm. Its function is as follows. Required for maturation of urease via the functional incorporation of the urease nickel metallocenter. This is Urease accessory protein UreF from Paracoccus denitrificans (strain Pd 1222).